An 890-amino-acid chain; its full sequence is MKRQSERDSSPSGRGSSSSAKRPREREREAEAGGRRAAHKASGGAKHPVPARARDKPRGSGSGGGGHRDGRGTGDANHRASSGRSSGSGAGGGGRGGKASGDPGASGMSPRASPLPPPPPPPGAEPACPGSSAAAPEYKTLLISSLSPALPAEHLEDRLFHQFKRFGEISLRLSHTPELGRVAYVNFRHPQDAREARQHALARQLLLYDRPLKVEPVYLRGGGGSSRRSSSSSAAASTPPPGPPAPADPLGYLPLHGGYQYKQRSLSPVAAPPLREPRARHAAAAFALDAAAAAAVGLSRERALDYYGLYDDRGRPYGYPAVCEEDLMPEDDQRATRNLFIGNLDHSVSEVELRRAFEKYGIIEEVVIKRPARGQGGAYAFLKFQNLDMAHRAKVAMSGRVIGRNPIKIGYGKANPTTRLWVGGLGPNTSLAALAREFDRFGSIRTIDHVKGDSFAYIQYESLDAAQAACAKMRGFPLGGPDRRLRVDFAKAEETRYPQQYQPSPLPVHYELLTDGYTRHRNLDADLVRDRTPPHLLYSDRDRTFLEGDWTSPSKSSDRRNSLEGYSRSVRSRSGERWGADGDRGLPKPWEERRKRRSLSSDRGRTTHSPYEERSRTKGSGQQSERGSDRTPERSRKENHSSEGTKESSSNSLSNSRHGAEERGHHHHHHEAADSSHGKKARDSERNHRTTEAEPKPLEEPKHETKKLKNLSEYAQTLQLGWNGLLVLKNSCFPTSMHILEGDQGVISSLLKDHTSGSKLTQLKIAQRLRLDQPKLDEVTRRIKQGSPNGYAVLLATQATPSGLGTEGMPTVEPGLQRRLLRNLVSYLKQKQAAGVISLPVGGSKGRDGTGMLYAFPPCDFSQQYLQSALRTLGKLEEEHMVIVIVRDTA.

A disordered region spans residues 1–133 (MKRQSERDSS…AEPACPGSSA (133 aa)). The span at 10–20 (SPSGRGSSSSA) shows a compositional bias: low complexity. Basic and acidic residues-rich tracts occupy residues 22–34 (RPRE…EAGG) and 66–78 (GHRD…DANH). Positions 86–99 (SGSGAGGGGRGGKA) are enriched in gly residues. Ser-109 and Ser-113 each carry phosphoserine. Over residues 113–124 (SPLPPPPPPPGA) the composition is skewed to pro residues. The region spanning 139–219 (KTLLISSLSP…RPLKVEPVYL (81 aa)) is the RRM 1 domain. A Glycyl lysine isopeptide (Lys-Gly) (interchain with G-Cter in SUMO2) cross-link involves residue Lys-213. The tract at residues 219–253 (LRGGGGSSRRSSSSSAAASTPPPGPPAPADPLGYL) is disordered. Residues 226–237 (SRRSSSSSAAAS) show a composition bias toward low complexity. Over residues 238–247 (TPPPGPPAPA) the composition is skewed to pro residues. Phosphoserine is present on residues Ser-265 and Ser-267. RRM domains are found at residues 337–414 (RNLF…YGKA) and 418–492 (TRLW…FAKA). At Thr-532 the chain carries Phosphothreonine. The tract at residues 547-705 (EGDWTSPSKS…KPLEEPKHET (159 aa)) is disordered. 3 positions are modified to phosphoserine: Ser-552, Ser-556, and Ser-562. 2 stretches are compositionally biased toward basic and acidic residues: residues 573–616 (RSGE…ERSR) and 626–646 (RGSD…EGTK). The Nuclear localization signal motif lies at 593 to 597 (RRKRR). The span at 647 to 657 (ESSSNSLSNSR) shows a compositional bias: low complexity. Residues 671 to 703 (EAADSSHGKKARDSERNHRTTEAEPKPLEEPKH) are compositionally biased toward basic and acidic residues. Lys-702 is covalently cross-linked (Glycyl lysine isopeptide (Lys-Gly) (interchain with G-Cter in SUMO2)). One can recognise an SPOC domain in the interval 711–889 (LSEYAQTLQL…HMVIVIVRDT (179 aa)). Positions 722 to 890 (WNGLLVLKNS…MVIVIVRDTA (169 aa)) are interaction with Epstein-Barr virus BMLF1.

Belongs to the RRM Spen family. Component of the WMM complex, a N6-methyltransferase complex composed of a catalytic subcomplex, named MAC, and of an associated subcomplex, named MACOM. The MAC subcomplex is composed of METTL3 and METTL14. The MACOM subcomplex is composed of WTAP, ZC3H13, CBLL1/HAKAI, VIRMA, and, in some cases of RBM15 (RBM15 or RBM15B). May interact with NCOR2. Interacts with NXF1, the interaction is required to promote mRNA export. As to quaternary structure, (Microbial infection) Interacts (via the SPOC domain) with Epstein-Barr virus BMLF1 (via the N-terminus); the interaction is direct. Ubiquitously expressed.

Its subcellular location is the nucleus. The protein resides in the nucleoplasm. The protein localises to the nucleus speckle. It is found in the nucleus envelope. RNA-binding protein that acts as a key regulator of N6-methyladenosine (m6A) methylation of RNAs, thereby regulating different processes, such as alternative splicing of mRNAs and X chromosome inactivation mediated by Xist RNA. Associated component of the WMM complex, a complex that mediates N6-methyladenosine (m6A) methylation of RNAs, a modification that plays a role in the efficiency of mRNA splicing and RNA processing. Plays a key role in m6A methylation, possibly by binding target RNAs and recruiting the WMM complex. Involved in random X inactivation mediated by Xist RNA: acts by binding Xist RNA and recruiting the WMM complex, which mediates m6A methylation, leading to target YTHDC1 reader on Xist RNA and promoting transcription repression activity of Xist. Functions in the regulation of alternative or illicit splicing, possibly by regulating m6A methylation. Inhibits pre-mRNA splicing. Also functions as a mRNA export factor by acting as a cofactor for the nuclear export receptor NXF1. The sequence is that of Putative RNA-binding protein 15B from Homo sapiens (Human).